The sequence spans 449 residues: UDP-N-acetylmuramoylalanine--D-glutamate ligase (449 aa).

An ATP-binding site is contributed by 118–124; sequence GTNGKTT.

The protein belongs to the MurCDEF family.

Its subcellular location is the cytoplasm. The enzyme catalyses UDP-N-acetyl-alpha-D-muramoyl-L-alanine + D-glutamate + ATP = UDP-N-acetyl-alpha-D-muramoyl-L-alanyl-D-glutamate + ADP + phosphate + H(+). The protein operates within cell wall biogenesis; peptidoglycan biosynthesis. Its function is as follows. Cell wall formation. Catalyzes the addition of glutamate to the nucleotide precursor UDP-N-acetylmuramoyl-L-alanine (UMA). This is UDP-N-acetylmuramoylalanine--D-glutamate ligase from Staphylococcus aureus (strain MRSA252).